Consider the following 398-residue polypeptide: Carbamoyl phosphate synthase small chain (398 aa).

The segment at 1 to 204 is CPSase; it reads MSPLLPSFPP…PAYGTLDTGK (204 aa). 3 residues coordinate L-glutamine: serine 53, glycine 256, and glycine 258. In terms of domain architecture, Glutamine amidotransferase type-1 spans 208 to 395; sequence KVVAYDFGVK…VELMNAASKK (188 aa). The Nucleophile role is filled by cysteine 284. L-glutamine-binding residues include leucine 285, glutamine 288, asparagine 326, glycine 328, and phenylalanine 329. Catalysis depends on residues histidine 368 and glutamate 370.

The protein belongs to the CarA family. In terms of assembly, composed of two chains; the small (or glutamine) chain promotes the hydrolysis of glutamine to ammonia, which is used by the large (or ammonia) chain to synthesize carbamoyl phosphate. Tetramer of heterodimers (alpha,beta)4.

The catalysed reaction is hydrogencarbonate + L-glutamine + 2 ATP + H2O = carbamoyl phosphate + L-glutamate + 2 ADP + phosphate + 2 H(+). The enzyme catalyses L-glutamine + H2O = L-glutamate + NH4(+). Its pathway is amino-acid biosynthesis; L-arginine biosynthesis; carbamoyl phosphate from bicarbonate: step 1/1. It participates in pyrimidine metabolism; UMP biosynthesis via de novo pathway; (S)-dihydroorotate from bicarbonate: step 1/3. In terms of biological role, small subunit of the glutamine-dependent carbamoyl phosphate synthetase (CPSase). CPSase catalyzes the formation of carbamoyl phosphate from the ammonia moiety of glutamine, carbonate, and phosphate donated by ATP, constituting the first step of 2 biosynthetic pathways, one leading to arginine and/or urea and the other to pyrimidine nucleotides. The small subunit (glutamine amidotransferase) binds and cleaves glutamine to supply the large subunit with the substrate ammonia. This is Carbamoyl phosphate synthase small chain from Polynucleobacter necessarius subsp. necessarius (strain STIR1).